The primary structure comprises 267 residues: Myxobacterial hemagglutinin (267 aa).

4 tandem repeats follow at residues 1-66, 67-133, 134-200, and 201-267. The segment at 1 to 267 is 4 X 65 AA tandem repeats; sequence MAAYLVQNQW…GPIGFRARLG (267 aa).

The protein belongs to the bacterial lectin family.

In terms of biological role, this lectin might have a role in the differentiation of cells. In Myxococcus xanthus, this protein is Myxobacterial hemagglutinin (mbhA).